An 89-amino-acid polypeptide reads, in one-letter code: Small ribosomal subunit protein uS15 (89 aa).

The protein belongs to the universal ribosomal protein uS15 family. Part of the 30S ribosomal subunit. Forms a bridge to the 50S subunit in the 70S ribosome, contacting the 23S rRNA.

Functionally, one of the primary rRNA binding proteins, it binds directly to 16S rRNA where it helps nucleate assembly of the platform of the 30S subunit by binding and bridging several RNA helices of the 16S rRNA. In terms of biological role, forms an intersubunit bridge (bridge B4) with the 23S rRNA of the 50S subunit in the ribosome. This is Small ribosomal subunit protein uS15 from Hyphomonas neptunium (strain ATCC 15444).